Consider the following 151-residue polypeptide: Large-conductance mechanosensitive channel (151 aa).

Transmembrane regions (helical) follow at residues 12–32 (GNIVDLAVAVVIGTAFTALVT) and 71–91 (VLLSAAINFFLIAFAVYFLVV). Positions 122–151 (AQTNGDSPGRHGGRGTPSPTDGPLASTESQ) are disordered.

Belongs to the MscL family. In terms of assembly, homopentamer.

The protein localises to the cell membrane. Its function is as follows. Channel that opens in response to stretch forces in the membrane lipid bilayer. May participate in the regulation of osmotic pressure changes within the cell. This Mycobacterium bovis (strain BCG / Pasteur 1173P2) protein is Large-conductance mechanosensitive channel.